Here is a 65-residue protein sequence, read N- to C-terminus: MKLKITLTKSLIACRVNQIKTAHCLGLKKINNQVIKDDTPAIHGMIKTISHLVVVEKVSDTKEQK.

It belongs to the universal ribosomal protein uL30 family. In terms of assembly, part of the 50S ribosomal subunit.

This is Large ribosomal subunit protein uL30 from Onion yellows phytoplasma (strain OY-M).